A 308-amino-acid chain; its full sequence is Pseudouridine-5'-phosphate glycosidase (308 aa).

Glutamate 26 serves as the catalytic Proton donor. Residues lysine 87 and valine 107 each contribute to the substrate site. Aspartate 139 is a Mn(2+) binding site. Substrate is bound at residue 141 to 143 (SAD). Lysine 160 acts as the Nucleophile in catalysis.

Belongs to the pseudouridine-5'-phosphate glycosidase family. Homotrimer. Requires Mn(2+) as cofactor.

The catalysed reaction is D-ribose 5-phosphate + uracil = psi-UMP + H2O. Its function is as follows. Catalyzes the reversible cleavage of pseudouridine 5'-phosphate (PsiMP) to ribose 5-phosphate and uracil. Functions biologically in the cleavage direction, as part of a pseudouridine degradation pathway. This Legionella pneumophila subsp. pneumophila (strain Philadelphia 1 / ATCC 33152 / DSM 7513) protein is Pseudouridine-5'-phosphate glycosidase.